The primary structure comprises 658 residues: Palmitoyltransferase ZDHHC5-B (658 aa).

Residues Met1–Arg24 are Cytoplasmic-facing. Residues Tyr25–Phe45 form a helical membrane-spanning segment. Over Thr46–Ser56 the chain is Extracellular. Residues Phe57–Thr77 form a helical membrane-spanning segment. At Phe78 to Tyr159 the chain is on the cytoplasmic side. A DHHC domain is found at Lys115 to Leu165. Catalysis depends on Cys145, which acts as the S-palmitoyl cysteine intermediate. A helical transmembrane segment spans residues Phe160–Leu180. Over Tyr181–Cys202 the chain is Extracellular. A helical membrane pass occupies residues Val203–Ala223. At Arg224–Val658 the chain is on the cytoplasmic side. Disordered stretches follow at residues Glu306–Ser419, Glu490–Ala522, and Gln540–Val658. Over residues Pro360–Pro398 the composition is skewed to polar residues. A compositionally biased stretch (gly residues) spans Gly407 to Ser419. The span at Ser565–Ser575 shows a compositional bias: pro residues. The segment covering Ser619–Asn633 has biased composition (polar residues). Positions Thr634–Lys644 are enriched in basic residues.

This sequence belongs to the DHHC palmitoyltransferase family. ERF2/ZDHHC9 subfamily.

The protein resides in the cell membrane. The enzyme catalyses L-cysteinyl-[protein] + hexadecanoyl-CoA = S-hexadecanoyl-L-cysteinyl-[protein] + CoA. Functionally, palmitoyltransferase that catalyzes the addition of palmitate onto various protein substrates and is involved in a variety of cellular processes. The chain is Palmitoyltransferase ZDHHC5-B from Danio rerio (Zebrafish).